Consider the following 363-residue polypeptide: tRNA-specific 2-thiouridylase MnmA (363 aa).

ATP-binding positions include 6–13 (AMSGGVDS) and Leu-32. Catalysis depends on Cys-101, which acts as the Nucleophile. Cys-101 and Cys-193 are disulfide-bonded. Residue Gly-125 participates in ATP binding. The interval 143 to 145 (KDQ) is interaction with tRNA. Cys-193 functions as the Cysteine persulfide intermediate in the catalytic mechanism.

The protein belongs to the MnmA/TRMU family.

Its subcellular location is the cytoplasm. The catalysed reaction is S-sulfanyl-L-cysteinyl-[protein] + uridine(34) in tRNA + AH2 + ATP = 2-thiouridine(34) in tRNA + L-cysteinyl-[protein] + A + AMP + diphosphate + H(+). Catalyzes the 2-thiolation of uridine at the wobble position (U34) of tRNA, leading to the formation of s(2)U34. The sequence is that of tRNA-specific 2-thiouridylase MnmA from Mycobacterium marinum (strain ATCC BAA-535 / M).